The following is a 226-amino-acid chain: ATP-dependent dethiobiotin synthetase BioD (226 aa).

13–18 (DVGKTL) lines the ATP pocket. Thr17 provides a ligand contact to Mg(2+). Lys38 is a catalytic residue. ATP is bound by residues Asp55, 117–120 (EGAG), 177–178 (NR), 206–208 (PFV), and Glu213. The Mg(2+) site is built by Asp55 and Glu117.

The protein belongs to the dethiobiotin synthetase family. Homodimer. Mg(2+) is required as a cofactor.

The protein localises to the cytoplasm. It carries out the reaction (7R,8S)-7,8-diammoniononanoate + CO2 + ATP = (4R,5S)-dethiobiotin + ADP + phosphate + 3 H(+). It functions in the pathway cofactor biosynthesis; biotin biosynthesis; biotin from 7,8-diaminononanoate: step 1/2. Its function is as follows. Catalyzes a mechanistically unusual reaction, the ATP-dependent insertion of CO2 between the N7 and N8 nitrogen atoms of 7,8-diaminopelargonic acid (DAPA, also called 7,8-diammoniononanoate) to form a ureido ring. This is ATP-dependent dethiobiotin synthetase BioD from Aeromonas hydrophila subsp. hydrophila (strain ATCC 7966 / DSM 30187 / BCRC 13018 / CCUG 14551 / JCM 1027 / KCTC 2358 / NCIMB 9240 / NCTC 8049).